The primary structure comprises 448 residues: Trigger factor (448 aa).

In terms of domain architecture, PPIase FKBP-type spans 162-243; sequence DDFAIIDIEA…VQQTKERKLP (82 aa). The interval 426-448 is disordered; the sequence is DEGKAVDPSEYFGEEEESAEESE. A compositionally biased stretch (acidic residues) spans 437 to 448; sequence FGEEEESAEESE.

It belongs to the FKBP-type PPIase family. Tig subfamily.

It localises to the cytoplasm. The catalysed reaction is [protein]-peptidylproline (omega=180) = [protein]-peptidylproline (omega=0). Its function is as follows. Involved in protein export. Acts as a chaperone by maintaining the newly synthesized protein in an open conformation. Functions as a peptidyl-prolyl cis-trans isomerase. This chain is Trigger factor, found in Corynebacterium diphtheriae (strain ATCC 700971 / NCTC 13129 / Biotype gravis).